We begin with the raw amino-acid sequence, 1252 residues long: DNA-directed RNA polymerase subunit beta (1252 aa).

Belongs to the RNA polymerase beta chain family. As to quaternary structure, the RNAP catalytic core consists of 2 alpha, 1 beta, 1 beta' and 1 omega subunit. When a sigma factor is associated with the core the holoenzyme is formed, which can initiate transcription.

The enzyme catalyses RNA(n) + a ribonucleoside 5'-triphosphate = RNA(n+1) + diphosphate. Functionally, DNA-dependent RNA polymerase catalyzes the transcription of DNA into RNA using the four ribonucleoside triphosphates as substrates. The chain is DNA-directed RNA polymerase subunit beta from Chlamydia trachomatis serovar D (strain ATCC VR-885 / DSM 19411 / UW-3/Cx).